The sequence spans 405 residues: MQNHGIKKVVLAYSGGLDTSAIIPWLKENYEGCDVVACVVDIGQDRDDLKGVEQKALRSGASECYVVDAREEFIKDYVYPVLQTGALYEGSYLLGTSMARPLIAKALVDVAKKVGADALCHGATGKGNDQVRFESAWAALAPHLKVIAPWREWNLRSREALLDYLKARDIPTTASLEKIYSRDENAWHISTEGGVLESPWNAPNQDCWVWTVDPKDAPDEAEQVTVTVEKGNVVAVNGEQLTPFGCLEVLNKIGAKHGVGRIDIVENRLVGIKSRGCYETPGGTIMMAALRGVEQLVLDRDSFKWREQVGLEMSYVVYDGRWFAPLRQSLQAAAQSLAEQVSGEVVLELYKGRVTAIQKKSTNSLYNEEFATFGEDEVYDHSHAGGFIRLFSLSSRIRALNELKK.

Residue 12–20 (AYSGGLDTS) coordinates ATP. Positions 92 and 97 each coordinate L-citrulline. G122 is a binding site for ATP. Positions 124, 128, and 129 each coordinate L-aspartate. N128 lines the L-citrulline pocket. 5 residues coordinate L-citrulline: R132, S181, S190, E266, and Y278.

It belongs to the argininosuccinate synthase family. Type 1 subfamily. In terms of assembly, homotetramer.

The protein localises to the cytoplasm. The enzyme catalyses L-citrulline + L-aspartate + ATP = 2-(N(omega)-L-arginino)succinate + AMP + diphosphate + H(+). The protein operates within amino-acid biosynthesis; L-arginine biosynthesis; L-arginine from L-ornithine and carbamoyl phosphate: step 2/3. In Cronobacter sakazakii (strain ATCC BAA-894) (Enterobacter sakazakii), this protein is Argininosuccinate synthase.